Reading from the N-terminus, the 117-residue chain is Non-specific lipid-transfer protein B (117 aa).

The N-terminal stretch at methionine 1–alanine 25 is a signal peptide. 4 disulfides stabilise this stretch: cysteine 29–cysteine 76, cysteine 39–cysteine 53, cysteine 54–cysteine 99, and cysteine 74–cysteine 113.

Belongs to the plant LTP family.

In terms of biological role, plant non-specific lipid-transfer proteins transfer phospholipids as well as galactolipids across membranes. May play a role in wax or cutin deposition in the cell walls of expanding epidermal cells and certain secretory tissues. This Brassica oleracea var. italica (Broccoli) protein is Non-specific lipid-transfer protein B (WAX9B).